A 485-amino-acid chain; its full sequence is E3 ubiquitin-protein ligase RNF14 (485 aa).

In terms of domain architecture, RWD spans 11-137; sequence DELLALASIY…QFLKEETLTY (127 aa). A D-box motif is present at residues 37-45; that stretch reads RIYLDLPQN. The interval 217 to 458 is TRIAD supradomain; it reads KLFLCSICFC…DSESPCFNRL (242 aa). Cys221, Cys224, Cys239, His241, Cys244, Cys247, Cys266, Cys271, Cys310, Cys315, Cys330, Cys333, Cys338, Cys341, and His346 together coordinate Zn(2+). An RING-type 1 zinc finger spans residues 221–271; it reads CSICFCEKLGSDCMYFLECKHVYCKACLKDYFEIQIKDGQVKCLNCPEPQC. Residues 290-351 form an IBR-type zinc finger; sequence ARYDRLLLQS…RLTYHGLSPC (62 aa). At Ser349 the chain carries Phosphoserine. Zn(2+) is bound by residues Cys351, Cys405, and Cys408. An RING-type 2; atypical zinc finger spans residues 405–434; sequence CPCCGTPIQKLDGCNKMTCTGCMQYFCWIC. Residue Cys418 is part of the active site. Residues Cys423, Cys426, Cys431, Cys434, His446, and Cys454 each contribute to the Zn(2+) site.

It belongs to the RBR family. RNF14 subfamily. In terms of assembly, interacts with GCN1; interaction takes place in response to ribosome collisions and is required for ubiquitination of EEF1A1/eEF1A. Interacts with the ubiquitin-conjugating enzymes UBE2E1 and UBE2E2. Interacts with AR/androgen receptor. Interacts with TCF7/TCF1, TCF7L1/TCF3 and TCF7L2/TCF4; promoting Wnt signaling. Post-translationally, RING-type zinc finger-dependent and UBE2E2-dependent autoubiquitination.

The protein localises to the cytoplasm. It is found in the nucleus. It catalyses the reaction [E2 ubiquitin-conjugating enzyme]-S-ubiquitinyl-L-cysteine + [acceptor protein]-L-lysine = [E2 ubiquitin-conjugating enzyme]-L-cysteine + [acceptor protein]-N(6)-ubiquitinyl-L-lysine.. The protein operates within protein modification; protein ubiquitination. Its function is as follows. E3 ubiquitin-protein ligase that plays a key role in the RNF14-RNF25 translation quality control pathway, a pathway that takes place when a ribosome has stalled during translation, and which promotes ubiquitination and degradation of translation factors on stalled ribosomes. Recruited to stalled ribosomes by the ribosome collision sensor GCN1 and mediates 'Lys-6'-linked ubiquitination of target proteins, leading to their degradation. Mediates ubiquitination of EEF1A1/eEF1A and ETF1/eRF1 translation factors on stalled ribosomes, leading to their degradation. Also catalyzes ubiquitination of ribosomal proteins RPL0, RPL1, RPL12, RPS13 and RPS17. Specifically required to resolve RNA-protein cross-links caused by reactive aldehydes, which trigger translation stress by stalling ribosomes: acts by catalying 'Lys-6'-linked ubiquitination of RNA-protein cross-links, leading to their removal by the ATP-dependent unfoldase VCP and subsequent degradation by the proteasome. Independently of its function in the response to stalled ribosomes, acts as a regulator of transcription in Wnt signaling via its interaction with TCF transcription factors (TCF7/TCF1, TCF7L1/TCF3 and TCF7L2/TCF4). May also play a role as a coactivator for androgen- and, to a lesser extent, progesterone-dependent transcription. The chain is E3 ubiquitin-protein ligase RNF14 from Mus musculus (Mouse).